Consider the following 779-residue polypeptide: Phosphoribosylformylglycinamidine synthase subunit PurL (779 aa).

His52 is a catalytic residue. ATP-binding residues include Tyr55 and Lys94. Position 96 (Glu96) interacts with Mg(2+). Substrate-binding positions include 97 to 100 and Arg119; that span reads SHNH. Catalysis depends on His98, which acts as the Proton acceptor. Residue Asp120 coordinates Mg(2+). Gln243 lines the substrate pocket. A Mg(2+)-binding site is contributed by Asp271. 315–317 contacts substrate; sequence ESQ. Residues Asn523 and Gly560 each coordinate ATP. Position 561 (Asn561) interacts with Mg(2+). Ser563 contacts substrate.

The protein belongs to the FGAMS family. As to quaternary structure, monomer. Part of the FGAM synthase complex composed of 1 PurL, 1 PurQ and 2 PurS subunits.

The protein resides in the cytoplasm. It catalyses the reaction N(2)-formyl-N(1)-(5-phospho-beta-D-ribosyl)glycinamide + L-glutamine + ATP + H2O = 2-formamido-N(1)-(5-O-phospho-beta-D-ribosyl)acetamidine + L-glutamate + ADP + phosphate + H(+). It functions in the pathway purine metabolism; IMP biosynthesis via de novo pathway; 5-amino-1-(5-phospho-D-ribosyl)imidazole from N(2)-formyl-N(1)-(5-phospho-D-ribosyl)glycinamide: step 1/2. In terms of biological role, part of the phosphoribosylformylglycinamidine synthase complex involved in the purines biosynthetic pathway. Catalyzes the ATP-dependent conversion of formylglycinamide ribonucleotide (FGAR) and glutamine to yield formylglycinamidine ribonucleotide (FGAM) and glutamate. The FGAM synthase complex is composed of three subunits. PurQ produces an ammonia molecule by converting glutamine to glutamate. PurL transfers the ammonia molecule to FGAR to form FGAM in an ATP-dependent manner. PurS interacts with PurQ and PurL and is thought to assist in the transfer of the ammonia molecule from PurQ to PurL. The protein is Phosphoribosylformylglycinamidine synthase subunit PurL of Prochlorococcus marinus subsp. pastoris (strain CCMP1986 / NIES-2087 / MED4).